The sequence spans 433 residues: Xylose isomerase (433 aa).

Residues His97 and Asp100 contribute to the active site. Residues Glu228, Glu264, His267, Asp292, Asp303, Asp305, and Asp334 each contribute to the Mg(2+) site.

It belongs to the xylose isomerase family. As to quaternary structure, homotetramer. The cofactor is Mg(2+).

It localises to the cytoplasm. It carries out the reaction alpha-D-xylose = alpha-D-xylulofuranose. The polypeptide is Xylose isomerase (Fervidobacterium gondwanense).